Consider the following 916-residue polypeptide: Translation initiation factor IF-2 (916 aa).

Over residues 151–191 (NLDEQQRLAESDRARDEAIQRKRDEEQAAKDRVEAERKAAE) the composition is skewed to basic and acidic residues. Disordered stretches follow at residues 151–262 (NLDE…SHVM) and 280–328 (HLSA…ERPT). Composition is skewed to low complexity over residues 192–243 (EAAA…ATPA) and 293–305 (RGKPTGRPGSSSS). Residues 415–584 (SRPPVVTIMG…SLQAEVLELK (170 aa)) enclose the tr-type G domain. The segment at 424 to 431 (GHVDHGKT) is G1. 424-431 (GHVDHGKT) contacts GTP. The tract at residues 449–453 (GITQH) is G2. Residues 470–473 (DTPG) form a G3 region. GTP contacts are provided by residues 470-474 (DTPGH) and 524-527 (NKID). The G4 stretch occupies residues 524–527 (NKID). A G5 region spans residues 560-562 (SAK).

Belongs to the TRAFAC class translation factor GTPase superfamily. Classic translation factor GTPase family. IF-2 subfamily.

It localises to the cytoplasm. Its function is as follows. One of the essential components for the initiation of protein synthesis. Protects formylmethionyl-tRNA from spontaneous hydrolysis and promotes its binding to the 30S ribosomal subunits. Also involved in the hydrolysis of GTP during the formation of the 70S ribosomal complex. This chain is Translation initiation factor IF-2, found in Xanthomonas campestris pv. campestris (strain B100).